The chain runs to 400 residues: Putative transposase for insertion sequence element IS5376 (400 aa).

The region spanning 5–67 is the HTH IS21-type domain; sequence GEFFMIKEMY…PFKPYLQKRM (63 aa). Positions 20–39 form a DNA-binding region, H-T-H motif; that stretch reads ISDIARELGIDRKTVRKYIH. Residues 35 to 55 form a disordered region; the sequence is RKYIHSPNPPSKSKRKQRKSK. The region spanning 113 to 287 is the Integrase catalytic domain; that stretch reads YETLPGEQMQ…SPQERWAEES (175 aa).

It belongs to the transposase IS21/IS408/IS1162 family.

Functionally, involved in the transposition of the insertion sequence. The protein is Putative transposase for insertion sequence element IS5376 of Geobacillus stearothermophilus (Bacillus stearothermophilus).